A 336-amino-acid polypeptide reads, in one-letter code: MLKTILVGATGYTGAELAHYITKHPELELAGLYVSEHSLDAGKPFSSLYGHLLGVVDQTIQPLALSNIKHICDDVDIVVLATAHEVSHDIAAEFLAQGTVVFDLSGAFRVNDPAFYEKYYGFKHNFDKELKSAVYGLAEWASADIAEANLIAVPGCYPTASLSALKPLAQHGLIAAEQKPIINAVSGVSGAGRKASLASAFCEVSHAPYGVFNHRHQPEISTHLGHEVIFTPHLGSFKRGILATINVKLVAGVTPEQVTAAYQEAYQDQPMVRLLPRRTPSIKAVEKTAYYDLAWQQQGQDLIVVSAIDNLLKGAAAQAMQCINIRFGFAMTTSLV.

The active site involves Cys156.

The protein belongs to the NAGSA dehydrogenase family. Type 1 subfamily.

It localises to the cytoplasm. It carries out the reaction N-acetyl-L-glutamate 5-semialdehyde + phosphate + NADP(+) = N-acetyl-L-glutamyl 5-phosphate + NADPH + H(+). The protein operates within amino-acid biosynthesis; L-arginine biosynthesis; N(2)-acetyl-L-ornithine from L-glutamate: step 3/4. Functionally, catalyzes the NADPH-dependent reduction of N-acetyl-5-glutamyl phosphate to yield N-acetyl-L-glutamate 5-semialdehyde. This Moritella abyssi protein is N-acetyl-gamma-glutamyl-phosphate reductase.